A 387-amino-acid chain; its full sequence is Succinate--CoA ligase [ADP-forming] subunit beta (387 aa).

Positions 9–244 constitute an ATP-grasp domain; sequence KALLQRYGVN…WSQDDAKEAE (236 aa). Residues K46, 53–55, E99, L102, and E107 each bind ATP; that span reads GRG. Residues N199 and D213 each coordinate Mg(2+). Residues N264 and 321–323 each bind substrate; that span reads GIM.

This sequence belongs to the succinate/malate CoA ligase beta subunit family. As to quaternary structure, heterotetramer of two alpha and two beta subunits. Mg(2+) serves as cofactor.

The catalysed reaction is succinate + ATP + CoA = succinyl-CoA + ADP + phosphate. It catalyses the reaction GTP + succinate + CoA = succinyl-CoA + GDP + phosphate. The protein operates within carbohydrate metabolism; tricarboxylic acid cycle; succinate from succinyl-CoA (ligase route): step 1/1. Functionally, succinyl-CoA synthetase functions in the citric acid cycle (TCA), coupling the hydrolysis of succinyl-CoA to the synthesis of either ATP or GTP and thus represents the only step of substrate-level phosphorylation in the TCA. The beta subunit provides nucleotide specificity of the enzyme and binds the substrate succinate, while the binding sites for coenzyme A and phosphate are found in the alpha subunit. The sequence is that of Succinate--CoA ligase [ADP-forming] subunit beta from Methylobacillus flagellatus (strain ATCC 51484 / DSM 6875 / VKM B-1610 / KT).